A 233-amino-acid polypeptide reads, in one-letter code: Orotidine 5'-phosphate decarboxylase (233 aa).

Residues Asp11, Lys33, 60 to 69, Thr120, Arg181, Gln190, Gly210, and Arg211 each bind substrate; that span reads DLKFHDIPNT. Lys62 functions as the Proton donor in the catalytic mechanism.

Belongs to the OMP decarboxylase family. Type 1 subfamily. In terms of assembly, homodimer.

The catalysed reaction is orotidine 5'-phosphate + H(+) = UMP + CO2. Its pathway is pyrimidine metabolism; UMP biosynthesis via de novo pathway; UMP from orotate: step 2/2. Functionally, catalyzes the decarboxylation of orotidine 5'-monophosphate (OMP) to uridine 5'-monophosphate (UMP). This is Orotidine 5'-phosphate decarboxylase from Vibrio campbellii (strain ATCC BAA-1116).